Consider the following 595-residue polypeptide: P2X purinoceptor 7 (595 aa).

At 1 to 22 (MPACCSWNDVFQYETNKVTRIQ) the chain is on the cytoplasmic side. The S-palmitoyl cysteine moiety is linked to residue cysteine 4. The helical transmembrane segment at 23-46 (SVNYGTIKWILHMTVFSYVSFALM) threads the bilayer. Residues 47–328 (SDKLYQRKEP…ILVFGTGGKF (282 aa)) lie on the Extracellular side of the membrane. An N-linked (GlcNAc...) asparagine glycan is attached at asparagine 74. 3 cysteine pairs are disulfide-bonded: cysteine 119/cysteine 168, cysteine 129/cysteine 152, and cysteine 135/cysteine 162. Arginine 125 is subject to ADP-ribosylarginine. Asparagine 187 is a glycosylation site (N-linked (GlcNAc...) asparagine). Position 189 (threonine 189) interacts with ATP. Residues asparagine 202 and asparagine 213 are each glycosylated (N-linked (GlcNAc...) asparagine). An intrachain disulfide couples cysteine 216 to cysteine 226. N-linked (GlcNAc...) asparagine glycosylation is present at asparagine 241. A disulfide bridge links cysteine 260 with cysteine 269. Asparagine 284 is a glycosylation site (N-linked (GlcNAc...) asparagine). Arginine 294 and lysine 311 together coordinate ATP. Residues 329-353 (DIIQLVVYIGSTLSYFGLATVCIDL) traverse the membrane as a helical segment. Residue serine 342 coordinates Na(+). The Cytoplasmic segment spans residues 354 to 595 (IINTYASTCC…GQYSGFKYPY (242 aa)). Residues 360 to 377 (STCCRSRVYPSCKCCEPC) form a C-cys anchor region. S-palmitoyl cysteine attachment occurs at residues cysteine 362, cysteine 363, cysteine 374, and cysteine 377. The tract at residues 395–595 (KPTLKYVSFV…GQYSGFKYPY (201 aa)) is cytoplasmic ballast. Positions 479, 499, and 506 each coordinate Zn(2+). GTP-binding residues include arginine 546, histidine 547, tyrosine 550, and alanine 567. Zn(2+) is bound at residue cysteine 572. GTP contacts are provided by lysine 583, serine 589, and glycine 590.

The protein belongs to the P2X receptor family. Homotrimer. Interacts with LAMA3, ITGB2, ACTB, ACTN4, SVIL, MPP3, HSPA1, HSPCB, HSPA8, PIK230 and PTPRB. Interacts (via C-terminus) with EMP2. In terms of processing, phosphorylation results in its inactivation. ADP-ribosylation at Arg-125 is necessary and sufficient to activate P2RX7 and gate the channel. Post-translationally, palmitoylation of several cysteines in the C-terminal cytoplasmic tail is required for efficient localization to cell surface. Palmitoylation prevents channel desensitization by physically anchoring the palmitoylated groups to the membrane.

It localises to the cell membrane. The enzyme catalyses Ca(2+)(in) = Ca(2+)(out). It carries out the reaction K(+)(in) = K(+)(out). The catalysed reaction is Na(+)(in) = Na(+)(out). Activated by high extracellular ATP levels (0.1-2.5 mM). The synthetic analog 2'(3')-O-(4-benzoylbenzoyl)ATP (BzATP) acts as a potent agonist. Does not undergo desensitization, instead, undergoes a facilitation process where currents progressively increase with repetitive or prolonged agonist application. Palmitoylation prevents channel desensitization. The permeability of the P2RX7 channel is modulated by the amount of cholesterol in the plasma membrane. Its function is as follows. ATP-gated nonselective transmembrane cation channel that requires high millimolar concentrations of ATP for activation. Upon ATP binding, it rapidly opens to allow the influx of small cations Na(+) and Ca(2+), and the K(+) efflux. Also has the ability to form a large pore in the cell membrane, allowing the passage of large cationic molecules. In microglia, may mediate the transmembrane transport of exogenous NADPH. In immune cells, P2RX7 acts as a molecular sensor in pathological inflammatory states by detecting and responding to high local concentrations of extracellar ATP. In microglial cells, P2RX7 activation leads to the release of pro-inflammatory cytokines, such as IL-1beta and IL-18, through the activation of the NLRP3 inflammasome and caspase-1. Cooperates with KCNK6 to activate NLRP3 inflammasome. Activates death pathways leading to apoptosis and autophagy. Activates death pathways leading to pyroptosis. Functionally, has a higher affinity for ATP, slower deactivation and an increased propensity to form large cation-permeable pores. This chain is P2X purinoceptor 7 (P2rx7), found in Rattus norvegicus (Rat).